Consider the following 314-residue polypeptide: MPIQLECLSHTPLHGYVDPAPEVVAEVERVQAAARDRVRAFDPELVVVFAPDHFNGFFYDVMPPFCIGAAATAIGDFKSLAGKLPVPADLALSLAESVMAADIDVALSHRMQVDHGCADALAALTGSLHRYPVIPVFINSVAPPMATLRRARLLGDAVGRFLSRAGKRVLVVGSGGISHEPPVPELAGASEEVAERLIAGRNPSPESRAARQARTVAAAKSFVAGDSHLHPLNPEWDRAFLSLLASGELTAVDGMTNDAITRDGGKSAHEIRTWVAAFGALAAYGPYRASLDFYRAIPEWIAGFATMHAEPAAV.

The active-site Proton donor is His115. Residue His179 is the Proton acceptor of the active site.

This sequence belongs to the LigB/MhpB extradiol dioxygenase family. As to quaternary structure, homotetramer. Fe(2+) is required as a cofactor.

It catalyses the reaction 3-(2,3-dihydroxyphenyl)propanoate + O2 = (2Z,4E)-2-hydroxy-6-oxonona-2,4-dienedioate + H(+). The enzyme catalyses (2E)-3-(2,3-dihydroxyphenyl)prop-2-enoate + O2 = (2Z,4E,7E)-2-hydroxy-6-oxonona-2,4,7-trienedioate + H(+). Its pathway is aromatic compound metabolism; 3-phenylpropanoate degradation. Functionally, catalyzes the non-heme iron(II)-dependent oxidative cleavage of 2,3-dihydroxyphenylpropionic acid and 2,3-dihydroxicinnamic acid into 2-hydroxy-6-ketononadienedioate and 2-hydroxy-6-ketononatrienedioate, respectively. The polypeptide is 2,3-dihydroxyphenylpropionate/2,3-dihydroxicinnamic acid 1,2-dioxygenase (Cupriavidus pinatubonensis (strain JMP 134 / LMG 1197) (Cupriavidus necator (strain JMP 134))).